The primary structure comprises 101 residues: MSAEKMTKLEENLQRAVALKKTVDRWRNFHIHCMWQTTLDQRRNLFAALRMKDTKEQELALSNKQLLVVRQAALHELFEKEYQQYQQELNQMGKAFYEERL.

As to quaternary structure, microtubule inner protein component of sperm flagellar doublet microtubules.

The protein localises to the cytoplasm. The protein resides in the cytoskeleton. Its subcellular location is the cilium axoneme. It localises to the flagellum axoneme. In terms of biological role, microtubule inner protein (MIP) part of the dynein-decorated doublet microtubules (DMTs) in cilia axoneme, which is required for motile cilia beating. In Mus musculus (Mouse), this protein is Cilia- and flagella-associated protein 141.